We begin with the raw amino-acid sequence, 306 residues long: UDP-N-acetylenolpyruvoylglucosamine reductase (306 aa).

Residues 29–193 (RVGGPADWLF…IRASLRGTPD (165 aa)) form the FAD-binding PCMH-type domain. Arg173 is an active-site residue. Ser222 functions as the Proton donor in the catalytic mechanism. Residue Glu292 is part of the active site.

Belongs to the MurB family. The cofactor is FAD.

It is found in the cytoplasm. The enzyme catalyses UDP-N-acetyl-alpha-D-muramate + NADP(+) = UDP-N-acetyl-3-O-(1-carboxyvinyl)-alpha-D-glucosamine + NADPH + H(+). Its pathway is cell wall biogenesis; peptidoglycan biosynthesis. In terms of biological role, cell wall formation. This is UDP-N-acetylenolpyruvoylglucosamine reductase from Gluconobacter oxydans (strain 621H) (Gluconobacter suboxydans).